The chain runs to 305 residues: Acyl transferase (305 aa).

Active-site charge relay system residues include serine 116, aspartate 213, and histidine 243.

It belongs to the LuxD family.

It functions in the pathway lipid metabolism; fatty acid reduction for biolumincescence. Acyl transferase is part of the fatty acid reductase system required for aldehyde biosynthesis; it produces fatty acids for the luminescent reaction. In Shewanella woodyi (strain ATCC 51908 / MS32), this protein is Acyl transferase.